The primary structure comprises 219 residues: Vacuolar iron transporter homolog 2.1 (219 aa).

Residues 1–15 (MTSNVQLSETNSPRN) show a composition bias toward polar residues. Residues 1–26 (MTSNVQLSETNSPRNQKTRPRAEKEE) form a disordered region. At T2 the chain carries N-acetylthreonine. The Cytoplasmic portion of the chain corresponds to 2-37 (TSNVQLSETNSPRNQKTRPRAEKEEVDYMQRAQWLR). A helical membrane pass occupies residues 38–58 (AALLGANDGLVTVASLMMGVG). Over 59–67 (SIKEDVKAM) the chain is Vacuolar. Residues 68 to 88 (LLVGFAGLVAGACSMAIGEFV) traverse the membrane as a helical segment. Residues 89-133 (SVCTQRDIETAQMKRAIEHKTSLSAIDEQEEEEKKERLPNPGQAA) lie on the Cytoplasmic side of the membrane. A helical transmembrane segment spans residues 134–154 (IASALAFSVGAAMPLLGAVFI). Residues 155-161 (ENHKVRM) lie on the Vacuolar side of the membrane. The helical transmembrane segment at 162-182 (VVVAVVATIALVVFGVTGAVL) threads the bilayer. At 183-193 (GKTSVVKSSVR) the chain is on the cytoplasmic side. A helical transmembrane segment spans residues 194-214 (VVIGGWMAMALTFGLTKFIGS). At 215–219 (AAMQI) the chain is on the vacuolar side.

This sequence belongs to the CCC1 family. In terms of tissue distribution, highly expressed in roots. inflorescences and at lower levels in leaves.

It localises to the vacuole membrane. The catalysed reaction is Fe(2+)(in) = Fe(2+)(out). Its function is as follows. Vacuolar iron transporter involved in the transfer of iron ions from the cytosol to the vacuole for intracellular iron storage. Involved in regulation of cellular iron homeostasis. Vacuolar iron storage is required for seed embryo and seedling development. The chain is Vacuolar iron transporter homolog 2.1 from Arabidopsis thaliana (Mouse-ear cress).